The primary structure comprises 332 residues: Olfactory receptor 10G6 (332 aa).

Residues 1-46 (MLEGVEHLLLLLLLTDVNSKELQSGNQTSVSHFILVGLHHPPQLGA) lie on the Extracellular side of the membrane. The N-linked (GlcNAc...) asparagine glycan is linked to N26. Residues 47 to 67 (PLFLAFLVIYLLTVSGNGLII) traverse the membrane as a helical segment. The Cytoplasmic portion of the chain corresponds to 68-75 (LTVLVDIR). The helical transmembrane segment at 76–96 (LHRPMCLFLCHLSFLDMTISC) threads the bilayer. The Extracellular portion of the chain corresponds to 97-120 (AIVPKMLAGFLLGSRIISFGGCVI). A disulfide bridge connects residues C118 and C210. The helical transmembrane segment at 121–141 (QLFSFHFLGCTECFLYTLMAY) threads the bilayer. Topologically, residues 142–160 (DRFLAICKPLHYATIMTHR) are cytoplasmic. The chain crosses the membrane as a helical span at residues 161-181 (VCNSLALGTWLGGTIHSLFQT). Over 182-218 (SFVFRLPFCGPNRVDYIFCDIPAMLRLACADTAINEL) the chain is Extracellular. Residues 219–238 (VTFADIGFLALTCFMLILTS) traverse the membrane as a helical segment. Over 239–258 (YGYIVAAILRIPSADGRRNA) the chain is Cytoplasmic. A helical transmembrane segment spans residues 259–279 (FSTCAAHLTVVIVYYVPCTFI). Topologically, residues 280 to 290 (YLRPCSQEPLD) are extracellular. A helical transmembrane segment spans residues 291–311 (GVVAVFYTVITPLLNSIIYTL). The Cytoplasmic segment spans residues 312–332 (CNKEMKAALQRLGGHKEVQPH).

The protein belongs to the G-protein coupled receptor 1 family.

The protein resides in the cell membrane. Its function is as follows. Odorant receptor. This Homo sapiens (Human) protein is Olfactory receptor 10G6 (OR10G6).